The primary structure comprises 490 residues: RNA-binding post-transcriptional regulator cip1 (490 aa).

Disordered regions lie at residues 16 to 63 (RGLA…GSSA), 76 to 97 (ASSR…YSQL), and 138 to 199 (HNVS…GEDT). The span at 34-62 (RLQSPLNSPKLQPIGSPQASRKTSGSGSS) shows a compositional bias: polar residues. Residues Ser-37, Ser-41, Ser-49, Ser-86, and Ser-141 each carry the phosphoserine modification. Low complexity-rich tracts occupy residues 76–88 (ASSR…PSDS) and 141–160 (SPPS…ASGK). Positions 164–192 (ADTSAEPSLDAFNSTQIKAGSTANSNSTP) are enriched in polar residues. Positions 202–280 (TAIVVKNIPF…RRLRVEWKRQ (79 aa)) constitute an RRM domain. Phosphoserine is present on residues Ser-397, Ser-401, and Ser-427. At Thr-431 the chain carries Phosphothreonine. Phosphoserine occurs at positions 435, 456, and 466. A disordered region spans residues 457 to 490 (PLQKASTLSSPFNSKNDNDASTSASKQSFGVSHF).

In terms of assembly, interacts with csx1. Phosphorylated by sty1.

Its subcellular location is the cytoplasm. Regulates global gene expression after oxidative stress. Interacts and stabilizes mRNAs and may regulate their transition between different cytoplasmic components after oxidative stress. The polypeptide is RNA-binding post-transcriptional regulator cip1 (cip1) (Schizosaccharomyces pombe (strain 972 / ATCC 24843) (Fission yeast)).